A 1080-amino-acid chain; its full sequence is DNA-directed RNA polymerase subunit beta (1080 aa).

It belongs to the RNA polymerase beta chain family. In terms of assembly, in plastids the minimal PEP RNA polymerase catalytic core is composed of four subunits: alpha, beta, beta', and beta''. When a (nuclear-encoded) sigma factor is associated with the core the holoenzyme is formed, which can initiate transcription.

The protein resides in the plastid. It localises to the chloroplast. It carries out the reaction RNA(n) + a ribonucleoside 5'-triphosphate = RNA(n+1) + diphosphate. Functionally, DNA-dependent RNA polymerase catalyzes the transcription of DNA into RNA using the four ribonucleoside triphosphates as substrates. The chain is DNA-directed RNA polymerase subunit beta from Mesostigma viride (Green alga).